The following is a 416-amino-acid chain: Argininosuccinate synthase (416 aa).

ATP-binding positions include 11 to 19 and Ala37; that span reads AYSGGLDTS. Tyr88 is a binding site for L-citrulline. Phosphotyrosine is present on residues Tyr88 and Tyr114. 116–124 contacts ATP; that stretch reads AHGATGKGN. 3 residues coordinate L-aspartate: Thr120, Asn124, and Asp125. Asn124 contributes to the L-citrulline binding site. Residues Arg128, Ser181, Ser190, Glu271, and Tyr283 each coordinate L-citrulline. Ser181 carries the phosphoserine modification.

The protein belongs to the argininosuccinate synthase family. Homotetramer.

It is found in the cytoplasm. It localises to the cytosol. The catalysed reaction is L-citrulline + L-aspartate + ATP = 2-(N(omega)-L-arginino)succinate + AMP + diphosphate + H(+). Its pathway is amino-acid biosynthesis; L-arginine biosynthesis; L-arginine from L-ornithine and carbamoyl phosphate: step 2/3. It participates in nitrogen metabolism; urea cycle; (N(omega)-L-arginino)succinate from L-aspartate and L-citrulline: step 1/1. One of the enzymes of the urea cycle, the metabolic pathway transforming neurotoxic amonia produced by protein catabolism into inocuous urea in the liver of ureotelic animals. Catalyzes the formation of arginosuccinate from aspartate, citrulline and ATP and together with ASL it is responsible for the biosynthesis of arginine in most body tissues. This Gallus gallus (Chicken) protein is Argininosuccinate synthase.